We begin with the raw amino-acid sequence, 184 residues long: UPF0149 protein PA14_69010 (184 aa).

It belongs to the UPF0149 family.

In Pseudomonas aeruginosa (strain UCBPP-PA14), this protein is UPF0149 protein PA14_69010.